We begin with the raw amino-acid sequence, 1014 residues long: C2 domain-containing protein 5 (1014 aa).

A C2 domain is found at 1–109 (MPGKLKVKIV…EAATVISGWF (109 aa)). Residues D19, D26, D76, D78, S81, and D84 each coordinate Ca(2+). Disordered regions lie at residues 274 to 328 (LNPN…GRDG), 639 to 669 (ETVG…AELD), 801 to 878 (ALQV…HRGG), and 992 to 1014 (EAGP…DSAT). Residues 275-292 (NPNTHSSGPSTPLKNQTY) are compositionally biased toward polar residues. The segment covering 293–318 (SFSPSKSFSRQSSSSDTDLSLTPKTG) has biased composition (low complexity). Positions 319–328 (MGSGSAGRDG) are enriched in gly residues. Residues 830-840 (SSDSPGPSTFS) show a composition bias toward polar residues. Positions 993–1006 (AGPGQPTAPGPQSA) are enriched in low complexity.

The cofactor is Ca(2+).

The protein resides in the cytoplasmic vesicle membrane. It is found in the cytoplasm. Its subcellular location is the cell cortex. The protein localises to the cell membrane. It localises to the cell projection. The protein resides in the ruffle. In terms of biological role, may be required for insulin-stimulated glucose transport and glucose transporter SLC2A4/GLUT4 translocation from intracellular glucose storage vesicle (GSV) to the plasma membrane (PM) in adipocytes. May bind phospholipid membranes in a calcium-dependent manner. This is C2 domain-containing protein 5 (c2cd5) from Xenopus tropicalis (Western clawed frog).